The sequence spans 223 residues: Uridylate kinase (223 aa).

An ATP-binding site is contributed by 9–10 (GS). G43 is a binding site for UMP. Residues G44 and R48 each coordinate ATP. UMP is bound by residues D65 and 112–118 (THPGHTT). Residues T137, N138, Y143, and D146 each coordinate ATP.

This sequence belongs to the UMP kinase family. Homohexamer.

It is found in the cytoplasm. The enzyme catalyses UMP + ATP = UDP + ADP. The protein operates within pyrimidine metabolism; CTP biosynthesis via de novo pathway; UDP from UMP (UMPK route): step 1/1. With respect to regulation, inhibited by UTP. Functionally, catalyzes the reversible phosphorylation of UMP to UDP. This chain is Uridylate kinase, found in Methanopyrus kandleri (strain AV19 / DSM 6324 / JCM 9639 / NBRC 100938).